The following is a 239-amino-acid chain: tRNA (guanine-N(7)-)-methyltransferase (239 aa).

4 residues coordinate S-adenosyl-L-methionine: E68, E93, D120, and D143. The active site involves D143. Residues K147, D180, and 217 to 220 contribute to the substrate site; that span reads TKFE.

The protein belongs to the class I-like SAM-binding methyltransferase superfamily. TrmB family.

The enzyme catalyses guanosine(46) in tRNA + S-adenosyl-L-methionine = N(7)-methylguanosine(46) in tRNA + S-adenosyl-L-homocysteine. It participates in tRNA modification; N(7)-methylguanine-tRNA biosynthesis. Functionally, catalyzes the formation of N(7)-methylguanine at position 46 (m7G46) in tRNA. This Vibrio vulnificus (strain CMCP6) protein is tRNA (guanine-N(7)-)-methyltransferase.